Reading from the N-terminus, the 185-residue chain is Ribosome-recycling factor (185 aa).

It belongs to the RRF family.

Its subcellular location is the cytoplasm. Responsible for the release of ribosomes from messenger RNA at the termination of protein biosynthesis. May increase the efficiency of translation by recycling ribosomes from one round of translation to another. This Actinobacillus succinogenes (strain ATCC 55618 / DSM 22257 / CCUG 43843 / 130Z) protein is Ribosome-recycling factor.